The chain runs to 255 residues: Large ribosomal subunit protein uL4 (255 aa).

The protein belongs to the universal ribosomal protein uL4 family. In terms of assembly, part of the 50S ribosomal subunit.

One of the primary rRNA binding proteins, this protein initially binds near the 5'-end of the 23S rRNA. It is important during the early stages of 50S assembly. It makes multiple contacts with different domains of the 23S rRNA in the assembled 50S subunit and ribosome. Its function is as follows. Forms part of the polypeptide exit tunnel. The sequence is that of Large ribosomal subunit protein uL4 from Thermoplasma volcanium (strain ATCC 51530 / DSM 4299 / JCM 9571 / NBRC 15438 / GSS1).